The following is a 73-amino-acid chain: Toxin Td9 (73 aa).

A signal peptide spans 1–7 (IGMVAEC). Residues 8-70 (KDGYLVGDDG…IWNSATNSCG (63 aa)) form the LCN-type CS-alpha/beta domain. Cystine bridges form between cysteine 18–cysteine 69, cysteine 22–cysteine 44, cysteine 30–cysteine 50, and cysteine 34–cysteine 52. The residue at position 71 (lysine 71) is a Lysine amide.

Belongs to the long (4 C-C) scorpion toxin superfamily. Sodium channel inhibitor family. Beta subfamily. As to expression, expressed by the venom gland.

The protein localises to the secreted. Its function is as follows. Beta toxins bind voltage-independently at site-4 of sodium channels (Nav) and shift the voltage of activation toward more negative potentials thereby affecting sodium channel activation and promoting spontaneous and repetitive firing. This Tityus discrepans (Venezuelan scorpion) protein is Toxin Td9.